The chain runs to 359 residues: Heat-inducible transcription repressor HrcA (359 aa).

Belongs to the HrcA family.

Functionally, negative regulator of class I heat shock genes (grpE-dnaK-dnaJ and groELS operons). Prevents heat-shock induction of these operons. This chain is Heat-inducible transcription repressor HrcA, found in Roseiflexus sp. (strain RS-1).